The following is a 146-amino-acid chain: Hemoglobin subunit beta (146 aa).

An N-acetylvaline modification is found at valine 1. Residues 2–146 form the Globin domain; the sequence is HLTPEEKNAV…VANALAHKYH (145 aa). A Phosphothreonine modification is found at threonine 12. Serine 44 is modified (phosphoserine). Lysine 59 is subject to N6-acetyllysine. Heme b is bound at residue histidine 63. Lysine 82 carries the N6-acetyllysine modification. Histidine 92 is a binding site for heme b. Cysteine 93 is modified (S-nitrosocysteine). Lysine 144 bears the N6-acetyllysine mark.

This sequence belongs to the globin family. As to quaternary structure, heterotetramer of two alpha chains and two beta chains. As to expression, red blood cells.

Involved in oxygen transport from the lung to the various peripheral tissues. The protein is Hemoglobin subunit beta (HBB) of Papio cynocephalus (Yellow baboon).